The sequence spans 578 residues: ATP-dependent RNA helicase has-1 (578 aa).

The disordered stretch occupies residues Met-1–Thr-91. The segment covering Asp-13–Lys-26 has biased composition (basic and acidic residues). Positions Lys-27–Lys-36 are enriched in basic residues. Acidic residues-rich tracts occupy residues Glu-43–Asn-54 and Glu-77–Asp-88. The short motif at Thr-107–Arg-135 is the Q motif element. The Helicase ATP-binding domain occupies Ile-138–Tyr-313. Ala-151 to Thr-158 lines the ATP pocket. The short motif at Asp-260–Asp-263 is the DEAD box element. Residues Lys-339 to Lys-355 carry the Bipartite nuclear localization signal motif. The region spanning Leu-343–Ile-497 is the Helicase C-terminal domain. Residues Ser-556–His-578 are disordered.

This sequence belongs to the DEAD box helicase family. DDX18/HAS1 subfamily. Associates in the nucleolus with the 60S and pre-60S ribosomal subunits.

Its subcellular location is the nucleus. It localises to the nucleolus. The enzyme catalyses ATP + H2O = ADP + phosphate + H(+). ATP-dependent RNA helicase involved in 40S ribosomal subunit biogenesis. Required for the processing and cleavage of 35S pre-rRNA at sites A0, A1, and A2, leading to mature 18S rRNA. The chain is ATP-dependent RNA helicase has-1 (has-1) from Neurospora crassa (strain ATCC 24698 / 74-OR23-1A / CBS 708.71 / DSM 1257 / FGSC 987).